Consider the following 130-residue polypeptide: UPF0251 protein MmarC6_0272 (130 aa).

It belongs to the UPF0251 family.

This Methanococcus maripaludis (strain C6 / ATCC BAA-1332) protein is UPF0251 protein MmarC6_0272.